The primary structure comprises 583 residues: MLO-like protein 6 (583 aa).

Topologically, residues 1-15 (MADQVKEKTLEETST) are extracellular. A helical membrane pass occupies residues 16-36 (WAVAVVCFVLLLISIVIEKLI). Topologically, residues 37 to 61 (HKIGSWFKKKNKKALYEALEKVKAE) are cytoplasmic. A helical membrane pass occupies residues 62–82 (LMLMGFISLLLTIGQGYISNI). At 83 to 161 (CIPKNIAASM…VSAYGMHQLH (79 aa)) the chain is on the extracellular side. A helical membrane pass occupies residues 162 to 182 (IFIFVLAVCHVIYCIVTYALG). The Cytoplasmic portion of the chain corresponds to 183-284 (KTKMRRWKKW…KYIQRSLEED (102 aa)). A helical membrane pass occupies residues 285 to 305 (FKTIVEINPVIWFIAVLFLLT). The Extracellular portion of the chain corresponds to 306-314 (NTNGLNSYL). Residues 315–335 (WLPFIPFIVILIVGTKLQVII) traverse the membrane as a helical segment. Residues 336-368 (TKLGLRIQEKGDVVKGTPLVQPGDHFFWFGRPR) lie on the Cytoplasmic side of the membrane. The chain crosses the membrane as a helical span at residues 369 to 389 (FILFLIHLVLFTNAFQLAFFV). Over 390 to 411 (WSTYEFGLKNCFHESRVDVIIR) the chain is Extracellular. Residues 412–432 (ISIGLLVQILCSYVTLPLYAL) form a helical membrane-spanning segment. Over 433–583 (VTQMGSKMKP…ISLRDFSFKR (151 aa)) the chain is Cytoplasmic. Residues 447-468 (ERVATALKSWHHTAKKNIKHGR) are calmodulin-binding. The interval 461-583 (KKNIKHGRTS…ISLRDFSFKR (123 aa)) is disordered. Over residues 470-484 (SESTTPFSSRPTTPT) the composition is skewed to low complexity. A compositionally biased stretch (basic and acidic residues) spans 541 to 551 (RFGEEESEKKF).

The protein belongs to the MLO family.

Its subcellular location is the membrane. Its function is as follows. May be involved in modulation of pathogen defense and leaf cell death. Activity seems to be regulated by Ca(2+)-dependent calmodulin binding and seems not to require heterotrimeric G proteins. The sequence is that of MLO-like protein 6 (MLO6) from Arabidopsis thaliana (Mouse-ear cress).